Reading from the N-terminus, the 241-residue chain is Pyridoxine 5'-phosphate synthase (241 aa).

A 3-amino-2-oxopropyl phosphate-binding site is contributed by N7. 9–10 (DH) contacts 1-deoxy-D-xylulose 5-phosphate. A 3-amino-2-oxopropyl phosphate-binding site is contributed by R18. The active-site Proton acceptor is the H43. 1-deoxy-D-xylulose 5-phosphate is bound by residues R45 and H50. The Proton acceptor role is filled by E70. Position 100 (T100) interacts with 1-deoxy-D-xylulose 5-phosphate. H191 (proton donor) is an active-site residue. 3-amino-2-oxopropyl phosphate-binding positions include S192 and 213–214 (GH).

It belongs to the PNP synthase family. As to quaternary structure, homooctamer; tetramer of dimers.

It is found in the cytoplasm. It catalyses the reaction 3-amino-2-oxopropyl phosphate + 1-deoxy-D-xylulose 5-phosphate = pyridoxine 5'-phosphate + phosphate + 2 H2O + H(+). Its pathway is cofactor biosynthesis; pyridoxine 5'-phosphate biosynthesis; pyridoxine 5'-phosphate from D-erythrose 4-phosphate: step 5/5. Functionally, catalyzes the complicated ring closure reaction between the two acyclic compounds 1-deoxy-D-xylulose-5-phosphate (DXP) and 3-amino-2-oxopropyl phosphate (1-amino-acetone-3-phosphate or AAP) to form pyridoxine 5'-phosphate (PNP) and inorganic phosphate. The sequence is that of Pyridoxine 5'-phosphate synthase from Nitrosomonas eutropha (strain DSM 101675 / C91 / Nm57).